The chain runs to 159 residues: 16 kDa outer membrane lipoprotein (159 aa).

A signal peptide spans 1 to 21 (MNKKIFTLFLVVAASAIFAVS). Residue C22 is the site of N-palmitoyl cysteine attachment. Residue C22 is the site of S-diacylglycerol cysteine attachment.

The protein localises to the cell outer membrane. This Brachyspira hyodysenteriae (Treponema hyodysenteriae) protein is 16 kDa outer membrane lipoprotein (smpA).